The following is a 424-amino-acid chain: Tyrosine--tRNA ligase (424 aa).

Residue Tyr37 participates in L-tyrosine binding. Positions 42-51 (PTADSLHLGH) match the 'HIGH' region motif. L-tyrosine-binding residues include Tyr175 and Gln179. Residues 235-239 (KFGKT) carry the 'KMSKS' region motif. Lys238 is an ATP binding site. Residues 357–414 (AELQKALVSAQLAPSRSQARTLIQSSSISVNGKKQLKPEYIFTSEDRLLDRYTLLRRG) form the S4 RNA-binding domain.

It belongs to the class-I aminoacyl-tRNA synthetase family. TyrS type 1 subfamily. Homodimer.

Its subcellular location is the cytoplasm. The enzyme catalyses tRNA(Tyr) + L-tyrosine + ATP = L-tyrosyl-tRNA(Tyr) + AMP + diphosphate + H(+). Catalyzes the attachment of tyrosine to tRNA(Tyr) in a two-step reaction: tyrosine is first activated by ATP to form Tyr-AMP and then transferred to the acceptor end of tRNA(Tyr). The sequence is that of Tyrosine--tRNA ligase from Hamiltonella defensa subsp. Acyrthosiphon pisum (strain 5AT).